A 762-amino-acid polypeptide reads, in one-letter code: MAEAKCPFSQSRSNANVAGGGTRNTDWWPDQLNLGILRQHAPASNPFERDFDYTAAFNSLDYYALKKDLHALMTDSQDWWPADFGHYGGLFIRMAWHSAGTYRVFDGRGGGGQGQQRFAPLNSWPDNASLDKARRLLWPIKQKYGAKISWADLMLLAGNVALESMGFKTYGFSGGRADTWEADESVYWGGESTWMGNDVRYSDGFPGVTKHGALSGDEPPHRNIHTRDLEKPLAASHMGLIYVNPEGPDGNPDPVAAARDIRTTFGRMGMNDEETVALIAGGHSFGKTHGAASSENVDVEPAAAGLENQGLGWSNRYQSGKGPHTITSGIEVTWTKTPTKWSHAFLEYLFRFDWELTKSPGGANQWQAKNTEAIIPDAYDPSKKHLPKMLTTDLSLRYDPAYEKIARRFLDHPDEFADAFSRAWFKLLHRDMGPRTRYIGPEAPTEDLIWQDPIPAVNHTLVDANDIAALKRTILDTGLNKSNFVSTAWASASTFRGTDKRGGANGARIRLAPQRQWEVNNQPWLEETLSALEKIQKDFNDRVSSTGKKISLADLIVLAGCAAVEKAAQEAGQTITVPFTPGRMDASQEQTEVESFSHLEPVADGFRNYGKSSSRVRAEHYLVDKAHLLTLTAPEMTVLVGGLRVLNTNYDGSKHGVLTSSPGRLTNDFFTNVLDMNTAWKAKDGGRDLYEGTDRKTGQPKWTATRADLVFGSHAELRALAEVYGSSDGQEKFVKDFVSAWDKVMNLDRFDLKGSGIARSKL.

The interval 1-22 (MAEAKCPFSQSRSNANVAGGGT) is disordered. Positions 96–242 (WHSAGTYRVF…LAASHMGLIY (147 aa)) form a cross-link, tryptophyl-tyrosyl-methioninium (Trp-Tyr) (with M-268). Histidine 97 (proton acceptor) is an active-site residue. A cross-link (tryptophyl-tyrosyl-methioninium (Tyr-Met) (with W-96)) is located at residues 242-268 (YVNPEGPDGNPDPVAAARDIRTTFGRM). A heme b-binding site is contributed by histidine 283.

It belongs to the peroxidase family. Peroxidase/catalase subfamily. In terms of assembly, homodimer or homotetramer. Requires heme b as cofactor. Post-translationally, formation of the three residue Trp-Tyr-Met cross-link is important for the catalase, but not the peroxidase activity of the enzyme.

Its subcellular location is the cytoplasm. It carries out the reaction H2O2 + AH2 = A + 2 H2O. The enzyme catalyses 2 H2O2 = O2 + 2 H2O. Functionally, bifunctional enzyme with both catalase and broad-spectrum peroxidase activity. This is Catalase-peroxidase from Aspergillus niger (strain ATCC MYA-4892 / CBS 513.88 / FGSC A1513).